Here is a 423-residue protein sequence, read N- to C-terminus: Enolase (423 aa).

Q166 lines the (2R)-2-phosphoglycerate pocket. E208 functions as the Proton donor in the catalytic mechanism. Residues D242, E283, and D310 each contribute to the Mg(2+) site. (2R)-2-phosphoglycerate-binding residues include K335, R364, S365, and K386. The Proton acceptor role is filled by K335.

It belongs to the enolase family. Requires Mg(2+) as cofactor.

It localises to the cytoplasm. It is found in the secreted. The protein resides in the cell surface. The catalysed reaction is (2R)-2-phosphoglycerate = phosphoenolpyruvate + H2O. It functions in the pathway carbohydrate degradation; glycolysis; pyruvate from D-glyceraldehyde 3-phosphate: step 4/5. In terms of biological role, catalyzes the reversible conversion of 2-phosphoglycerate (2-PG) into phosphoenolpyruvate (PEP). It is essential for the degradation of carbohydrates via glycolysis. This Elusimicrobium minutum (strain Pei191) protein is Enolase.